Here is a 396-residue protein sequence, read N- to C-terminus: Purine ribonucleoside efflux pump NepI (396 aa).

Residues 1 to 21 lie on the Cytoplasmic side of the membrane; the sequence is MSEFIAENRGADAITRPNWSA. The helical transmembrane segment at 22–42 threads the bilayer; it reads VFSVAFCVACLIIVEFLPVSL. The Periplasmic portion of the chain corresponds to 43–54; the sequence is LTPMAQDLGISE. Residues 55 to 75 form a helical membrane-spanning segment; it reads GVAGQSVTVTAFVAMFASLFI. The Cytoplasmic portion of the chain corresponds to 76–85; the sequence is TQTIQATDRR. The chain crosses the membrane as a helical span at residues 86–106; it reads YVVILFAVLLTLSCLLVSFAN. A topological domain (periplasmic) is located at residue serine 107. A helical membrane pass occupies residues 108–128; the sequence is FSLLLIGRACLGLALGGFWAM. Residues 129–147 lie on the Cytoplasmic side of the membrane; that stretch reads SASLTMRLVPPRTVPKALS. Residues 148-168 form a helical membrane-spanning segment; that stretch reads VIFGAVSIALVIAAPLGSFLG. Topologically, residues 169–175 are periplasmic; that stretch reads ELIGWRN. The helical transmembrane segment at 176–196 threads the bilayer; that stretch reads VFNAAAVMGVLCIFWIIKSLP. Residues 197–215 lie on the Cytoplasmic side of the membrane; that stretch reads SLPGEPSHQKQNTFRLLQR. A helical membrane pass occupies residues 216 to 236; it reads PGVMAGMIAIFMSFAGQFAFF. Residues 237–255 lie on the Periplasmic side of the membrane; that stretch reads TYIRPVYMNLAGFGVDGLT. Residues 256–276 form a helical membrane-spanning segment; it reads LVLLSFGIASFIGTSLSSFIL. The Cytoplasmic portion of the chain corresponds to 277-281; sequence KRSVK. Residues 282 to 302 traverse the membrane as a helical segment; the sequence is LALAGAPLILAVSALVLTLWG. At 303 to 305 the chain is on the periplasmic side; that stretch reads SDK. Residues 306 to 326 traverse the membrane as a helical segment; the sequence is IVATGVAIIWGLTFALVPVGW. At 327 to 343 the chain is on the cytoplasmic side; sequence STWITRSLADQAEKAGS. Residues 344–364 traverse the membrane as a helical segment; that stretch reads IQVAVIQLANTCGAAIGGYAL. Residues 365 to 366 are Periplasmic-facing; sequence DN. The helical transmembrane segment at 367–387 threads the bilayer; it reads IGLTSPLMLSGTLMLLTALLV. At 388–396 the chain is on the cytoplasmic side; sequence TAKVKMKKS.

The protein belongs to the major facilitator superfamily. DHA1 family. NepI (TC 2.A.1.2.26) subfamily.

The protein localises to the cell inner membrane. The catalysed reaction is inosine(in) + H(+)(out) = inosine(out) + H(+)(in). It catalyses the reaction guanosine(in) + H(+)(out) = guanosine(out) + H(+)(in). Involved in the efflux of purine ribonucleosides, such as inosine and guanosine. In Shigella flexneri, this protein is Purine ribonucleoside efflux pump NepI.